The chain runs to 75 residues: RNA-binding protein KhpA (75 aa).

Residues 29–75 (SIIIELKVAPEDMGKVIGKQGRIAQAIRTLVKAAALKEKKRVIVEII) enclose the KH domain.

It belongs to the KhpA RNA-binding protein family. In terms of assembly, forms a complex with KhpB.

Its subcellular location is the cytoplasm. In terms of biological role, a probable RNA chaperone. Forms a complex with KhpB which binds to cellular RNA and controls its expression. Plays a role in peptidoglycan (PG) homeostasis and cell length regulation. The sequence is that of RNA-binding protein KhpA from Caldanaerobacter subterraneus subsp. tengcongensis (strain DSM 15242 / JCM 11007 / NBRC 100824 / MB4) (Thermoanaerobacter tengcongensis).